The sequence spans 160 residues: Zinc finger A20 and AN1 domain-containing stress-associated protein 5 (160 aa).

The A20-type zinc-finger motif lies at Thr-20–Ala-54. 12 residues coordinate Zn(2+): Cys-26, Cys-30, Cys-42, Cys-45, Cys-101, Cys-104, Cys-115, Cys-117, Cys-122, His-125, His-131, and Cys-133. The AN1-type zinc finger occupies Gln-95–Gly-141.

In terms of biological role, may be involved in environmental stress response. This Arabidopsis thaliana (Mouse-ear cress) protein is Zinc finger A20 and AN1 domain-containing stress-associated protein 5 (SAP5).